The primary structure comprises 201 residues: Potassium-transporting ATPase KdpC subunit (201 aa).

The chain crosses the membrane as a helical span at residues Leu-12–Leu-34. Residues Arg-69–Thr-102 form a disordered region. The span at Ser-81–Pro-101 shows a compositional bias: polar residues.

Belongs to the KdpC family. In terms of assembly, the system is composed of three essential subunits: KdpA, KdpB and KdpC.

It localises to the cell inner membrane. Functionally, part of the high-affinity ATP-driven potassium transport (or Kdp) system, which catalyzes the hydrolysis of ATP coupled with the electrogenic transport of potassium into the cytoplasm. This subunit acts as a catalytic chaperone that increases the ATP-binding affinity of the ATP-hydrolyzing subunit KdpB by the formation of a transient KdpB/KdpC/ATP ternary complex. In Rhodopseudomonas palustris (strain TIE-1), this protein is Potassium-transporting ATPase KdpC subunit.